The chain runs to 368 residues: Protein-glutamate methylesterase/protein-glutamine glutaminase 2 (368 aa).

The 118-residue stretch at 6-123 (KVLLVDDSAV…KEYLESAAGE (118 aa)) folds into the Response regulatory domain. Aspartate 57 carries the post-translational modification 4-aspartylphosphate. A CheB-type methylesterase domain is found at 169–355 (IAGANKIAAL…SLERIPQCVL (187 aa)). Residues serine 181, histidine 207, and aspartate 303 contribute to the active site.

Belongs to the CheB family. Phosphorylated by CheA. Phosphorylation of the N-terminal regulatory domain activates the methylesterase activity.

Its subcellular location is the cytoplasm. It catalyses the reaction [protein]-L-glutamate 5-O-methyl ester + H2O = L-glutamyl-[protein] + methanol + H(+). It carries out the reaction L-glutaminyl-[protein] + H2O = L-glutamyl-[protein] + NH4(+). Functionally, involved in chemotaxis. Part of a chemotaxis signal transduction system that modulates chemotaxis in response to various stimuli. Catalyzes the demethylation of specific methylglutamate residues introduced into the chemoreceptors (methyl-accepting chemotaxis proteins or MCP) by CheR. Also mediates the irreversible deamidation of specific glutamine residues to glutamic acid. The chain is Protein-glutamate methylesterase/protein-glutamine glutaminase 2 from Hahella chejuensis (strain KCTC 2396).